The chain runs to 334 residues: S-adenosylmethionine decarboxylase proenzyme (334 aa).

Phenylalanine 7 is a binding site for substrate. Residues glutamate 8 and glutamate 11 contribute to the active site. Glutamate 67 contributes to the substrate binding site. The active-site Schiff-base intermediate with substrate; via pyruvic acid is the serine 68. Serine 68 carries the post-translational modification Pyruvic acid (Ser); by autocatalysis. Cysteine 82 (proton donor; for catalytic activity) is an active-site residue. A substrate-binding site is contributed by phenylalanine 223. Catalysis depends on proton acceptor; for processing activity residues serine 229 and histidine 243. Glutamate 247 serves as a coordination point for substrate. At serine 298 the chain carries Phosphoserine.

It belongs to the eukaryotic AdoMetDC family. Heterotetramer of two alpha and two beta chains. Pyruvate is required as a cofactor. Post-translationally, is synthesized initially as an inactive proenzyme. Formation of the active enzyme involves a self-maturation process in which the active site pyruvoyl group is generated from an internal serine residue via an autocatalytic post-translational modification. Two non-identical subunits are generated from the proenzyme in this reaction, and the pyruvate is formed at the N-terminus of the alpha chain, which is derived from the carboxyl end of the proenzyme. The post-translation cleavage follows an unusual pathway, termed non-hydrolytic serinolysis, in which the side chain hydroxyl group of the serine supplies its oxygen atom to form the C-terminus of the beta chain, while the remainder of the serine residue undergoes an oxidative deamination to produce ammonia and the pyruvoyl group blocking the N-terminus of the alpha chain.

The catalysed reaction is S-adenosyl-L-methionine + H(+) = S-adenosyl 3-(methylsulfanyl)propylamine + CO2. It functions in the pathway amine and polyamine biosynthesis; S-adenosylmethioninamine biosynthesis; S-adenosylmethioninamine from S-adenosyl-L-methionine: step 1/1. Its function is as follows. Essential for biosynthesis of the polyamines spermidine and spermine. Promotes maintenance and self-renewal of embryonic stem cells, by maintaining spermine levels. The polypeptide is S-adenosylmethionine decarboxylase proenzyme (AMD1) (Mesocricetus auratus (Golden hamster)).